Reading from the N-terminus, the 150-residue chain is Arginine repressor (150 aa).

The protein belongs to the ArgR family.

The protein localises to the cytoplasm. Its pathway is amino-acid biosynthesis; L-arginine biosynthesis [regulation]. In terms of biological role, regulates arginine biosynthesis genes. This chain is Arginine repressor, found in Staphylococcus epidermidis (strain ATCC 35984 / DSM 28319 / BCRC 17069 / CCUG 31568 / BM 3577 / RP62A).